Reading from the N-terminus, the 179-residue chain is ATP-dependent protease subunit HslV (179 aa).

The active site involves Thr-7. Residues Gly-162, Cys-165, and Thr-168 each coordinate Na(+).

Belongs to the peptidase T1B family. HslV subfamily. In terms of assembly, a double ring-shaped homohexamer of HslV is capped on each side by a ring-shaped HslU homohexamer. The assembly of the HslU/HslV complex is dependent on binding of ATP.

It localises to the cytoplasm. The catalysed reaction is ATP-dependent cleavage of peptide bonds with broad specificity.. Its activity is regulated as follows. Allosterically activated by HslU binding. Protease subunit of a proteasome-like degradation complex believed to be a general protein degrading machinery. This chain is ATP-dependent protease subunit HslV, found in Bordetella avium (strain 197N).